The primary structure comprises 316 residues: Ornithine carbamoyltransferase (316 aa).

Residues 57-60 (STRT), Gln84, Arg108, and 135-138 (HPCQ) contribute to the carbamoyl phosphate site. Residues Asn166, Asp230, and 234 to 235 (SM) contribute to the L-ornithine site. Residues 269-270 (CL) and Arg297 each bind carbamoyl phosphate.

Belongs to the aspartate/ornithine carbamoyltransferase superfamily. OTCase family.

The protein resides in the cytoplasm. It carries out the reaction carbamoyl phosphate + L-ornithine = L-citrulline + phosphate + H(+). Its pathway is amino-acid biosynthesis; L-arginine biosynthesis; L-arginine from L-ornithine and carbamoyl phosphate: step 1/3. Reversibly catalyzes the transfer of the carbamoyl group from carbamoyl phosphate (CP) to the N(epsilon) atom of ornithine (ORN) to produce L-citrulline. The protein is Ornithine carbamoyltransferase (argF) of Bacillus cereus (strain ATCC 14579 / DSM 31 / CCUG 7414 / JCM 2152 / NBRC 15305 / NCIMB 9373 / NCTC 2599 / NRRL B-3711).